The chain runs to 323 residues: Formimidoylglutamase (323 aa).

Mn(2+) contacts are provided by H131, D157, H159, D161, C245, and D247.

This sequence belongs to the arginase family. It depends on Mn(2+) as a cofactor.

The catalysed reaction is N-formimidoyl-L-glutamate + H2O = formamide + L-glutamate. The protein operates within amino-acid degradation; L-histidine degradation into L-glutamate; L-glutamate from N-formimidoyl-L-glutamate (hydrolase route): step 1/1. Catalyzes the conversion of N-formimidoyl-L-glutamate to L-glutamate and formamide. The sequence is that of Formimidoylglutamase from Geobacillus kaustophilus (strain HTA426).